We begin with the raw amino-acid sequence, 116 residues long: Tyrosine-protein phosphatase 20 (116 aa).

Residues 1-116 enclose the Tyrosine-protein phosphatase domain; it reads WMMIVEQKCR…EIGGDAPMVV (116 aa). Aspartate 84 lines the substrate pocket.

Belongs to the protein-tyrosine phosphatase family.

The catalysed reaction is O-phospho-L-tyrosyl-[protein] + H2O = L-tyrosyl-[protein] + phosphate. The sequence is that of Tyrosine-protein phosphatase 20 (STY-20) from Styela plicata (Wrinkled sea squirt).